Reading from the N-terminus, the 302-residue chain is Sodium/potassium-transporting ATPase subunit beta-233 (302 aa).

Over 1-30 (MSGNKDSDGGWKTFIWNSEKKELLGRTGCS) the chain is Cytoplasmic. A helical; Signal-anchor for type II membrane protein transmembrane segment spans residues 31 to 51 (WFKILLFYVIFYGCLAAVFVG). Residues 52–302 (TIQALLLTLS…FDIKITVNDS (251 aa)) lie on the Extracellular side of the membrane. 2 disulfides stabilise this stretch: C125-C148 and C158-C174. Residues N193 and N263 are each glycosylated (N-linked (GlcNAc...) asparagine). C213 and C274 are disulfide-bonded.

It belongs to the X(+)/potassium ATPases subunit beta family. The sodium/potassium-transporting ATPase is composed of a catalytic alpha subunit, an auxiliary non-catalytic beta subunit and an additional regulatory subunit. Glycosylated. Expressed mainly in epithelial tissues.

It is found in the cell membrane. This is the non-catalytic component of the active enzyme, which catalyzes the hydrolysis of ATP coupled with the exchange of Na(+) and K(+) ions across the plasma membrane. The beta subunit regulates, through assembly of alpha/beta heterodimers, the number of sodium pumps transported to the plasma membrane. This chain is Sodium/potassium-transporting ATPase subunit beta-233, found in Anguilla anguilla (European freshwater eel).